The following is a 698-amino-acid chain: Probable xyloglucan glycosyltransferase 2 (698 aa).

2 helical membrane passes run 124–144 and 190–210; these read GFLA…WNGW and ILLF…CFWI. Asp-272 is a catalytic residue. Substrate-binding residues include Asp-331 and Asp-333. Residue Asp-425 is part of the active site. 4 helical membrane passes run 503-523, 528-548, 653-668, and 673-693; these read LILP…TMFV, LPVW…ILPS, LALS…RSLL, and IHFY…LDLI.

The protein belongs to the glycosyltransferase 2 family. Plant cellulose synthase-like C subfamily.

It localises to the golgi apparatus membrane. Its function is as follows. Probable beta-1,4-glucan synthase rather involved in the synthesis of the xyloglucan backbone than cellulose. Seems to work simultaneously with xyloglucan 6-xylosyltransferase. Xyloglucan is a noncellulosic polysaccharides of plant cell wall and consists of a glucan backbone substituted by xylose, galactose and fucose. The polypeptide is Probable xyloglucan glycosyltransferase 2 (CSLC2) (Oryza sativa subsp. indica (Rice)).